The primary structure comprises 37 residues: Large ribosomal subunit protein bL36c (37 aa).

It belongs to the bacterial ribosomal protein bL36 family.

The protein localises to the plastid. It localises to the chloroplast. The protein is Large ribosomal subunit protein bL36c of Pleurastrum terricola (Filamentous green alga).